A 196-amino-acid chain; its full sequence is Transmembrane protein 126A (196 aa).

The Mitochondrial matrix portion of the chain corresponds to 1 to 34; that stretch reads MESHKPSTSKDDLILNIISRKIKQLPESDRNLLE. The helical transmembrane segment at 35–55 threads the bilayer; sequence YGSAYIGLNAAFGGLIANSLF. The Mitochondrial intermembrane portion of the chain corresponds to 56-57; the sequence is RR. A helical membrane pass occupies residues 58–78; sequence ILNVTQARLASSLPMAVIPFL. Residues 79 to 106 lie on the Mitochondrial matrix side of the membrane; sequence TANLSYQSLVSLPLSTGDLNCETCTTTR. A helical membrane pass occupies residues 107–127; the sequence is GALVGLVMGGLYPILLAIPVN. Residues 128–159 lie on the Mitochondrial intermembrane side of the membrane; that stretch reads GGLAARYESSPLPQRGNIFNYWITVSKPVFRK. The helical transmembrane segment at 160–176 threads the bilayer; sequence MLFPTLLQTVFASYLGS. At 177-196 the chain is on the mitochondrial matrix side; that stretch reads RQYKLLIKALQLPEPDLEIH.

This sequence belongs to the TMEM126 family. As to quaternary structure, interacts with OXA1L; promoting cotranslational quality control in mitochondria. As to expression, in the retina, significant levels of expression are detected in the ganglion cell layer, the optic nerve head, the outer plexiform layer, and in the outer ellipsoide length of photoreceptor inner segments.

It localises to the mitochondrion inner membrane. Protein required for the cotranslational protein quality control in the inner membrane of the mitochondria. Associates with newly synthesized polypeptides and may act as a chaperone that cooperates with OXA1L for the insertion of newly synthesized mitochondrial proteins into the inner membrane. Required for the assembly of the ND4 module of mitochondrial complex I. The sequence is that of Transmembrane protein 126A from Mus musculus (Mouse).